The chain runs to 537 residues: Chaperonin GroEL 1 (537 aa).

ATP is bound by residues 29–32, 86–90, glycine 413, 478–480, and aspartate 494; these read TLGP, DGTTT, and NAA.

This sequence belongs to the chaperonin (HSP60) family. As to quaternary structure, forms a cylinder of 14 subunits composed of two heptameric rings stacked back-to-back. Interacts with the co-chaperonin GroES.

The protein localises to the cytoplasm. It carries out the reaction ATP + H2O + a folded polypeptide = ADP + phosphate + an unfolded polypeptide.. Together with its co-chaperonin GroES, plays an essential role in assisting protein folding. The GroEL-GroES system forms a nano-cage that allows encapsulation of the non-native substrate proteins and provides a physical environment optimized to promote and accelerate protein folding. In Corynebacterium efficiens (strain DSM 44549 / YS-314 / AJ 12310 / JCM 11189 / NBRC 100395), this protein is Chaperonin GroEL 1.